Reading from the N-terminus, the 985-residue chain is P3N-PIPO polyprotein (985 aa).

One can recognise a Peptidase S30 domain in the interval 144 to 287; it reads TFRDGHMNKF…MATVTHMEQY (144 aa). Residues His195, Asp204, and Ser238 each act as for P1 proteinase activity in the active site. An Involved in interaction with stylet and aphid transmission motif is present at residues 337–340; sequence KLTC. An Involved in virions binding and aphid transmission motif is present at residues 595–597; it reads PTK. A Peptidase C6 domain is found at 621–743; that stretch reads LYIALDGYCY…ESEIKHYRVG (123 aa). Catalysis depends on for helper component proteinase activity residues Cys629 and His702.

This sequence belongs to the potyviridae P3N-PIPO polyprotein family. As to quaternary structure, interacts (via PIPO domain) with host PCaP1 protein; this interaction may help to anchor the movement complex to the plasma membrane from which the complex could move to the plasmodesmata. In terms of processing, potyviral RNA is expressed as two polyproteins which undergo post-translational proteolytic processing. Genome polyprotein is processed by NIa-pro, P1 and HC-pro proteinases resulting in the production of at least ten individual proteins. P3N-PIPO is cleaved by P1 and HC-pro proteinases resulting in the production of three individual proteins. The P1 proteinase and the HC-pro cleave only their respective C-termini autocatalytically.

The protein localises to the host cell junction. It is found in the host plasmodesma. The enzyme catalyses Hydrolyzes a Gly-|-Gly bond at its own C-terminus, commonly in the sequence -Tyr-Xaa-Val-Gly-|-Gly, in the processing of the potyviral polyprotein.. Its function is as follows. Required for aphid transmission and also has proteolytic activity. Only cleaves a Gly-Gly dipeptide at its own C-terminus. Interacts with virions and aphid stylets. Acts as a suppressor of RNA-mediated gene silencing, also known as post-transcriptional gene silencing (PTGS), a mechanism of plant viral defense that limits the accumulation of viral RNAs. May have RNA-binding activity. Functionally, allows efficient cell to cell propagation, by bypassing the host cell wall barrier. Transports viral genome to neighboring plant cells directly through plasmosdesmata, without any budding. The sequence is that of P3N-PIPO polyprotein from Pepper mottle virus (isolate California) (PeMV).